The following is a 101-amino-acid chain: Interleukin-8 (101 aa).

The N-terminal stretch at 1–22 is a signal peptide; the sequence is MTSKLVVALLAAFMLSAALCEA. R27 bears the Citrulline mark. Disulfide bonds link C34/C61 and C36/C77.

Belongs to the intercrine alpha (chemokine CxC) family. In terms of assembly, homodimer. Interacts with TNFAIP6 (via Link domain); this interaction interferes with chemokine binding to glycosaminoglycans. Post-translationally, citrullination at Arg-27 prevents proteolysis, and dampens tissue inflammation, it also enhances leukocytosis, possibly through impaired chemokine clearance from the blood circulation.

The protein localises to the secreted. Its function is as follows. Chemotactic factor that mediates inflammatory response by attracting neutrophils, basophils, and T-cells to clear pathogens and protect the host from infection. Also plays an important role in neutrophil activation. Released in response to an inflammatory stimulus, exerts its effect by binding to the G-protein-coupled receptors CXCR1 and CXCR2, primarily found in neutrophils, monocytes and endothelial cells. G-protein heterotrimer (alpha, beta, gamma subunits) constitutively binds to CXCR1/CXCR2 receptor and activation by IL8 leads to beta and gamma subunits release from Galpha (GNAI2 in neutrophils) and activation of several downstream signaling pathways including PI3K and MAPK pathways. The protein is Interleukin-8 (CXCL8) of Felis catus (Cat).